A 500-amino-acid chain; its full sequence is Zinc finger protein 689 (500 aa).

The segment at 1 to 24 (MAPPSAPLLEQAPGEVGPTRRRGR) is disordered. The KRAB domain occupies 29-100 (LKFADVAVYF…AALDPQEYRR (72 aa)). The interval 110 to 144 (TRQKNEEKEVFPPKDVPRKGKRGRKPSKPRLIARQ) is disordered. Residues 112-127 (QKNEEKEVFPPKDVPR) show a composition bias toward basic and acidic residues. The span at 128–137 (KGKRGRKPSK) shows a compositional bias: basic residues. A C2H2-type 1; degenerate zinc finger spans residues 149 to 171 (PICPDCGCTFPDLPALESHKCAQ). 10 consecutive C2H2-type zinc fingers follow at residues 177–199 (YPCP…RRAH), 205–227 (YVCD…QVIH), 233–255 (YHCP…RTTH), 261–283 (HQCP…QRTH), 289–311 (YTCL…QRIH), 317–339 (YPCP…RRVH), 345–367 (YACE…QLLH), 373–395 (YPCP…RSTH), 401–423 (HACD…RRVH), and 429–451 (YACD…QLLH). Lysine 455 participates in a covalent cross-link: Glycyl lysine isopeptide (Lys-Gly) (interchain with G-Cter in SUMO2). Residues 457-482 (FPCLECGRCFRQRWSLAVHKCCPNTH) form a C2H2-type 12 zinc finger.

The protein belongs to the krueppel C2H2-type zinc-finger protein family.

The protein localises to the nucleus. In terms of biological role, may be involved in transcriptional regulation. This Rattus norvegicus (Rat) protein is Zinc finger protein 689 (Znf689).